The following is a 130-amino-acid chain: Small ribosomal subunit protein uS8 (130 aa).

Belongs to the universal ribosomal protein uS8 family. In terms of assembly, part of the 30S ribosomal subunit.

One of the primary rRNA binding proteins, it binds directly to 16S rRNA central domain where it helps coordinate assembly of the platform of the 30S subunit. The polypeptide is Small ribosomal subunit protein uS8 (Methanoculleus marisnigri (strain ATCC 35101 / DSM 1498 / JR1)).